The following is a 256-amino-acid chain: Kallikrein-15 (256 aa).

A signal peptide spans 1-16 (MWLLLTLSFLLASTAA). A propeptide spans 17 to 21 (QDGDK) (activation peptide). The Peptidase S1 domain occupies 22–254 (LLEGDECAPH…YLEWIRETMK (233 aa)). A disulfide bridge links Cys-47 with Cys-63. Catalysis depends on charge relay system residues His-62 and Asp-106. Disulfide bonds link Cys-138–Cys-215, Cys-180–Cys-194, and Cys-205–Cys-230. N-linked (GlcNAc...) asparagine glycosylation is present at Asn-171. Catalysis depends on Ser-209, which acts as the Charge relay system. N-linked (GlcNAc...) asparagine glycosylation is present at Asn-232.

Belongs to the peptidase S1 family. Kallikrein subfamily. In terms of tissue distribution, highest expression in the thyroid gland. Also expressed in the prostate, salivary, and adrenal glands and in the colon testis and kidney.

The protein resides in the secreted. Its function is as follows. Protease whose physiological substrate is not yet known. This Homo sapiens (Human) protein is Kallikrein-15 (KLK15).